The sequence spans 422 residues: Adenylosuccinate synthetase (422 aa).

Residues 12 to 18 and 40 to 42 contribute to the GTP site; these read GDEGKGK and GHT. Aspartate 13 acts as the Proton acceptor in catalysis. 2 residues coordinate Mg(2+): aspartate 13 and glycine 40. IMP-binding positions include 13–16, 38–41, threonine 129, arginine 143, asparagine 221, threonine 236, and arginine 300; these read DEGK and NAGH. The active-site Proton donor is histidine 41. 296–302 provides a ligand contact to substrate; the sequence is VTTGRKR. GTP-binding positions include arginine 302, 328 to 330, and 410 to 412; these read KLD and GVG.

It belongs to the adenylosuccinate synthetase family. As to quaternary structure, homodimer. Mg(2+) serves as cofactor.

It localises to the cytoplasm. The enzyme catalyses IMP + L-aspartate + GTP = N(6)-(1,2-dicarboxyethyl)-AMP + GDP + phosphate + 2 H(+). It participates in purine metabolism; AMP biosynthesis via de novo pathway; AMP from IMP: step 1/2. Functionally, plays an important role in the de novo pathway and in the salvage pathway of purine nucleotide biosynthesis. Catalyzes the first committed step in the biosynthesis of AMP from IMP. This is Adenylosuccinate synthetase from Pyrenophora tritici-repentis (strain Pt-1C-BFP) (Wheat tan spot fungus).